We begin with the raw amino-acid sequence, 227 residues long: Cytochrome c oxidase subunit 2 (227 aa).

The Mitochondrial intermembrane segment spans residues 1 to 14; that stretch reads MAYPFQLGLQDATS. Residues 15–45 form a helical membrane-spanning segment; that stretch reads PIMEELLHFHDHTLMIVFLISSLVLYIISLM. The Mitochondrial matrix portion of the chain corresponds to 46–59; sequence LTTKLTHTSTMDAQ. Residues 60–87 traverse the membrane as a helical segment; the sequence is EVETVWTILPAIILILIALPSLRILYMM. Topologically, residues 88–227 are mitochondrial intermembrane; it reads DEINNPSLTV…YFETWSALMV (140 aa). Positions 161, 196, 198, 200, 204, and 207 each coordinate Cu cation. Position 198 (E198) interacts with Mg(2+). Y218 is modified (phosphotyrosine).

This sequence belongs to the cytochrome c oxidase subunit 2 family. In terms of assembly, component of the cytochrome c oxidase (complex IV, CIV), a multisubunit enzyme composed of 14 subunits. The complex is composed of a catalytic core of 3 subunits MT-CO1, MT-CO2 and MT-CO3, encoded in the mitochondrial DNA, and 11 supernumerary subunits COX4I, COX5A, COX5B, COX6A, COX6B, COX6C, COX7A, COX7B, COX7C, COX8 and NDUFA4, which are encoded in the nuclear genome. The complex exists as a monomer or a dimer and forms supercomplexes (SCs) in the inner mitochondrial membrane with NADH-ubiquinone oxidoreductase (complex I, CI) and ubiquinol-cytochrome c oxidoreductase (cytochrome b-c1 complex, complex III, CIII), resulting in different assemblies (supercomplex SCI(1)III(2)IV(1) and megacomplex MCI(2)III(2)IV(2)). Found in a complex with TMEM177, COA6, COX18, COX20, SCO1 and SCO2. Interacts with TMEM177 in a COX20-dependent manner. Interacts with COX20. Interacts with COX16. Requires Cu cation as cofactor.

It localises to the mitochondrion inner membrane. The enzyme catalyses 4 Fe(II)-[cytochrome c] + O2 + 8 H(+)(in) = 4 Fe(III)-[cytochrome c] + 2 H2O + 4 H(+)(out). In terms of biological role, component of the cytochrome c oxidase, the last enzyme in the mitochondrial electron transport chain which drives oxidative phosphorylation. The respiratory chain contains 3 multisubunit complexes succinate dehydrogenase (complex II, CII), ubiquinol-cytochrome c oxidoreductase (cytochrome b-c1 complex, complex III, CIII) and cytochrome c oxidase (complex IV, CIV), that cooperate to transfer electrons derived from NADH and succinate to molecular oxygen, creating an electrochemical gradient over the inner membrane that drives transmembrane transport and the ATP synthase. Cytochrome c oxidase is the component of the respiratory chain that catalyzes the reduction of oxygen to water. Electrons originating from reduced cytochrome c in the intermembrane space (IMS) are transferred via the dinuclear copper A center (CU(A)) of subunit 2 and heme A of subunit 1 to the active site in subunit 1, a binuclear center (BNC) formed by heme A3 and copper B (CU(B)). The BNC reduces molecular oxygen to 2 water molecules using 4 electrons from cytochrome c in the IMS and 4 protons from the mitochondrial matrix. In Urocyon cinereoargenteus (Gray fox), this protein is Cytochrome c oxidase subunit 2 (MT-CO2).